Consider the following 506-residue polypeptide: Tabersonine 16-hydroxylase 1 (506 aa).

The helical transmembrane segment at 1-21 (MEFYYFLYLAFLLFCFILSKT) threads the bilayer. Cys447 contributes to the heme binding site.

It belongs to the cytochrome P450 family. The cofactor is heme. As to expression, predominantly expressed in young leaves of mature plants. Low expression in roots and flowers, but not detected in stems and old leaves. Found predominantly in leaf epidermis. Barely detected in roots, internodes, young and mature leaves, and flower buds, but relatively abundant in fully developed flowers. Not detected in leaf epidermal cells.

The protein resides in the endoplasmic reticulum membrane. The enzyme catalyses (-)-tabersonine + reduced [NADPH--hemoprotein reductase] + O2 = 16-hydroxytabersonine + oxidized [NADPH--hemoprotein reductase] + H2O + H(+). It functions in the pathway alkaloid biosynthesis; vindoline biosynthesis. Functionally, involved in the flower biosynthesis of vindoline, a precursor of vinblastine and vincristine. Hydroxylates specifically tabersonine, 2,3-dihydrotabersonine and 2,3-dihydro-3-hydroxytabersonine, but has no activity with naringenin, tryptamine, secologanin, strictosidine, ajmalicine, vindoline and catharanthine. In Catharanthus roseus (Madagascar periwinkle), this protein is Tabersonine 16-hydroxylase 1.